A 353-amino-acid chain; its full sequence is Interferon-stimulated 20 kDa exonuclease-like 2 (353 aa).

Disordered stretches follow at residues Met1–Asp93 and Ala125–Ser172. Basic and acidic residues predominate over residues Pro14–Ala23. Over residues Lys24–Leu35 the composition is skewed to basic residues. Residues Leu54–Glu63 show a composition bias toward basic and acidic residues. Positions Arg135–Pro151 are enriched in basic residues. Residues Gln152–Ser172 show a composition bias toward polar residues. Residues Lys178–Asp353 enclose the Exonuclease domain.

It is found in the nucleus. The protein resides in the nucleolus. Functionally, 3'-&gt; 5'-exoribonuclease involved in ribosome biogenesis in the processing of the 12S pre-rRNA. Displays a strong specificity for a 3'-end containing a free hydroxyl group. The sequence is that of Interferon-stimulated 20 kDa exonuclease-like 2 (ISG20L2) from Homo sapiens (Human).